The sequence spans 97 residues: Citrate lyase acyl carrier protein 2 (97 aa).

S14 carries the post-translational modification O-(phosphoribosyl dephospho-coenzyme A)serine.

The protein belongs to the CitD family. In terms of assembly, oligomer with a subunit composition of (alpha,beta,gamma)6.

It is found in the cytoplasm. Covalent carrier of the coenzyme of citrate lyase. In Salmonella paratyphi A (strain ATCC 9150 / SARB42), this protein is Citrate lyase acyl carrier protein 2.